The following is a 315-amino-acid chain: 4-hydroxy-3-methylbut-2-enyl diphosphate reductase (315 aa).

Cysteine 12 lines the [4Fe-4S] cluster pocket. Positions 41 and 74 each coordinate (2E)-4-hydroxy-3-methylbut-2-enyl diphosphate. Dimethylallyl diphosphate-binding residues include histidine 41 and histidine 74. Isopentenyl diphosphate contacts are provided by histidine 41 and histidine 74. Residue cysteine 96 coordinates [4Fe-4S] cluster. Residue histidine 124 coordinates (2E)-4-hydroxy-3-methylbut-2-enyl diphosphate. Position 124 (histidine 124) interacts with dimethylallyl diphosphate. Histidine 124 is a binding site for isopentenyl diphosphate. Glutamate 126 functions as the Proton donor in the catalytic mechanism. Threonine 168 provides a ligand contact to (2E)-4-hydroxy-3-methylbut-2-enyl diphosphate. Cysteine 198 is a [4Fe-4S] cluster binding site. (2E)-4-hydroxy-3-methylbut-2-enyl diphosphate contacts are provided by serine 226, serine 227, asparagine 228, and serine 270. Residues serine 226, serine 227, asparagine 228, and serine 270 each coordinate dimethylallyl diphosphate. 4 residues coordinate isopentenyl diphosphate: serine 226, serine 227, asparagine 228, and serine 270.

Belongs to the IspH family. It depends on [4Fe-4S] cluster as a cofactor.

The catalysed reaction is isopentenyl diphosphate + 2 oxidized [2Fe-2S]-[ferredoxin] + H2O = (2E)-4-hydroxy-3-methylbut-2-enyl diphosphate + 2 reduced [2Fe-2S]-[ferredoxin] + 2 H(+). It carries out the reaction dimethylallyl diphosphate + 2 oxidized [2Fe-2S]-[ferredoxin] + H2O = (2E)-4-hydroxy-3-methylbut-2-enyl diphosphate + 2 reduced [2Fe-2S]-[ferredoxin] + 2 H(+). It participates in isoprenoid biosynthesis; dimethylallyl diphosphate biosynthesis; dimethylallyl diphosphate from (2E)-4-hydroxy-3-methylbutenyl diphosphate: step 1/1. It functions in the pathway isoprenoid biosynthesis; isopentenyl diphosphate biosynthesis via DXP pathway; isopentenyl diphosphate from 1-deoxy-D-xylulose 5-phosphate: step 6/6. Catalyzes the conversion of 1-hydroxy-2-methyl-2-(E)-butenyl 4-diphosphate (HMBPP) into a mixture of isopentenyl diphosphate (IPP) and dimethylallyl diphosphate (DMAPP). Acts in the terminal step of the DOXP/MEP pathway for isoprenoid precursor biosynthesis. The chain is 4-hydroxy-3-methylbut-2-enyl diphosphate reductase from Pseudomonas putida (strain GB-1).